The primary structure comprises 1053 residues: Protein CLEC16A (1053 aa).

The 148-residue stretch at 51–198 (IRSITEILIW…AVRTITLNVY (148 aa)) folds into the FPL domain. Disordered regions lie at residues 375-434 (SLEM…GESE), 452-471 (STSVQEQNTTDEEKSAAATC), and 892-983 (SSPS…SPSL). Residues 381–392 (HKGKRRVQKRPN) are compositionally biased toward basic residues. Positions 892–938 (SSPSLSSQSPPSASGSPSGSGSTSHCDSGGTSSSSTPSTAQSPADAP) are enriched in low complexity.

Belongs to the CLEC16A/gop-1 family. As to quaternary structure, interacts with RNF41/NRDP1. Almost exclusively expressed in immune cells, including dendritic cells, B-lymphocytes and natural killer cells.

Its subcellular location is the endosome membrane. The protein resides in the lysosome membrane. Regulator of mitophagy through the upstream regulation of the RNF41/NRDP1-PRKN pathway. Mitophagy is a selective form of autophagy necessary for mitochondrial quality control. The RNF41/NRDP1-PRKN pathway regulates autophagosome-lysosome fusion during late mitophagy. May protect RNF41/NRDP1 from proteasomal degradation, RNF41/NRDP1 which regulates proteasomal degradation of PRKN. Plays a key role in beta cells functions by regulating mitophagy/autophagy and mitochondrial health. The chain is Protein CLEC16A from Homo sapiens (Human).